A 1516-amino-acid polypeptide reads, in one-letter code: Myosin-14 (1516 aa).

The Myosin N-terminal SH3-like domain occupies 7–56 (NVGSCVWVEDPEVAWIDGEVIEVKGSDIKVKCTSGKTVAIKVSSAYPKDV). The region spanning 61–738 (SGVDDMTRLA…QMADLDARRN (678 aa)) is the Myosin motor domain. Residues 155-162 (GESGAGKT) and 208-216 (NNNSSRFGK) contribute to the ATP site. 4 actin-binding regions span residues 494-528 (LIEK…YQTF), 530-553 (DHKH…AGDV), 588-612 (FPLL…KQQL), and 612-634 (LVTL…KPNN). IQ domains are found at residues 741–770 (LGRA…VATN), 764–793 (LRKV…DAAV), 789–818 (RDAA…AAVS), 812–841 (LYFA…DKAA), 837–866 (QDKA…AAIT), and 860–889 (LKKA…AAKE). The stretch at 890–1056 (TGVLEAAKSK…ENKILRQKSL (167 aa)) forms a coiled coil. The interval 1061–1085 (GHLPPTPVKGSQNGHFSSKESPFNG) is disordered. Residues 1069-1084 (KGSQNGHFSSKESPFN) are compositionally biased toward polar residues. In terms of domain architecture, Dilute spans 1158-1463 (DRLVQMIGSA…IANMRVLMTE (306 aa)).

The protein belongs to the TRAFAC class myosin-kinesin ATPase superfamily. Myosin family. Plant myosin class XI subfamily. As to quaternary structure, homodimer.

In terms of biological role, myosin heavy chain that is required for the cell cycle-regulated transport of various organelles and proteins for their segregation. Functions by binding with its tail domain to receptor proteins on organelles and exerting force with its N-terminal motor domain against actin filaments, thereby transporting its cargo along polarized actin cables. This Arabidopsis thaliana (Mouse-ear cress) protein is Myosin-14 (XI-H).